Reading from the N-terminus, the 213-residue chain is Pyrrolidone-carboxylate peptidase (213 aa).

Active-site residues include Glu78, Cys141, and His165.

It belongs to the peptidase C15 family. In terms of assembly, homotetramer.

It is found in the cytoplasm. It carries out the reaction Release of an N-terminal pyroglutamyl group from a polypeptide, the second amino acid generally not being Pro.. In terms of biological role, removes 5-oxoproline from various penultimate amino acid residues except L-proline. The protein is Pyrrolidone-carboxylate peptidase of Enterococcus faecalis (strain ATCC 700802 / V583).